The chain runs to 319 residues: L-tryptophan isonitrile synthase AmbI1 (319 aa).

This sequence belongs to the isocyanide synthase family.

It carries out the reaction D-ribulose 5-phosphate + L-tryptophan = (2S)-3-(1H-indol-3-yl)-2-isocyanopropanoate + hydroxyacetone + formaldehyde + phosphate + H2O + H(+). Involved in the biosynthesis of ambiguines, a family of hapalindole-type alkaloids. Responsible for the synthesis of the isonitrile group on tryptophan using ribulose 5-phosphate as the source of the carbon atom. The sequence is that of L-tryptophan isonitrile synthase AmbI1 from Fischerella ambigua (strain UTEX 1903).